The primary structure comprises 390 residues: Chorismate synthase (390 aa).

NADP(+)-binding residues include R40 and R46. Residues 128-130, 251-252, G296, 311-315, and R339 contribute to the FMN site; these read RAS, QA, and KPIPT.

This sequence belongs to the chorismate synthase family. In terms of assembly, homotetramer. FMNH2 is required as a cofactor.

It carries out the reaction 5-O-(1-carboxyvinyl)-3-phosphoshikimate = chorismate + phosphate. It functions in the pathway metabolic intermediate biosynthesis; chorismate biosynthesis; chorismate from D-erythrose 4-phosphate and phosphoenolpyruvate: step 7/7. In terms of biological role, catalyzes the anti-1,4-elimination of the C-3 phosphate and the C-6 proR hydrogen from 5-enolpyruvylshikimate-3-phosphate (EPSP) to yield chorismate, which is the branch point compound that serves as the starting substrate for the three terminal pathways of aromatic amino acid biosynthesis. This reaction introduces a second double bond into the aromatic ring system. The polypeptide is Chorismate synthase (Sulfurihydrogenibium sp. (strain YO3AOP1)).